The sequence spans 196 residues: MEMREAYIERQTKETRIRVKLNLDGAGTAQVDTGIGFFDHMLEALARFGYLDLEVAAEGDLQVDPHHTIEDCGLVFGQAIREALGERRGIERVGDTLLPMDEALVQVALDLSNRPYLVWDVECPEGMVGGFPVEMAEEFFRAVSVQAGITLHIRLFSGKNRHHILEAIFKGFGRALGLALRENPRFQGVLSTKGVL.

Belongs to the imidazoleglycerol-phosphate dehydratase family.

It localises to the cytoplasm. The catalysed reaction is D-erythro-1-(imidazol-4-yl)glycerol 3-phosphate = 3-(imidazol-4-yl)-2-oxopropyl phosphate + H2O. The protein operates within amino-acid biosynthesis; L-histidine biosynthesis; L-histidine from 5-phospho-alpha-D-ribose 1-diphosphate: step 6/9. This Desulfitobacterium hafniense (strain Y51) protein is Imidazoleglycerol-phosphate dehydratase.